A 387-amino-acid chain; its full sequence is Cyclin-J-like protein (387 aa).

The region spanning D13–C142 is the Cyclin N-terminal domain.

The protein belongs to the cyclin family. Cyclin J subfamily.

The chain is Cyclin-J-like protein (Ccnjl) from Mus musculus (Mouse).